Here is a 309-residue protein sequence, read N- to C-terminus: Porphobilinogen deaminase (309 aa).

Position 241 is an S-(dipyrrolylmethanemethyl)cysteine (Cys241).

Belongs to the HMBS family. Monomer. Requires dipyrromethane as cofactor.

The enzyme catalyses 4 porphobilinogen + H2O = hydroxymethylbilane + 4 NH4(+). The protein operates within porphyrin-containing compound metabolism; protoporphyrin-IX biosynthesis; coproporphyrinogen-III from 5-aminolevulinate: step 2/4. Its function is as follows. Tetrapolymerization of the monopyrrole PBG into the hydroxymethylbilane pre-uroporphyrinogen in several discrete steps. In Campylobacter concisus (strain 13826), this protein is Porphobilinogen deaminase.